We begin with the raw amino-acid sequence, 1294 residues long: RKFIIANARVENCAVIYCNDGFCELCGYSRAEVMQRPCTCDFLHGPRTQRRAAAQIAQALLGAEERKVEIAFYRKDGSCFLCLVDVVPVKNEDGAVIMFILNFEVVMEKDMVGSPARDTNHRGPPTSWLTPGRAKTFRLKLPALLALTTRESSSVRPGGTGGSGAPGAVVVDVDLTPAAPSSESLALDEVSALDNHVAGPAEERRALVAPGSPPSSVPGPPHTSPRAHSLNPDASGSSCSLARTRSRESCASVRRASSADDIEAMRAGALPPPPRHASTGAMHPLRSGLLNSTSDSDLVRYRTISKIPQITLNFVDLKGDPFLASPTSDREIIAPKIKERTHNVTEKVTQVLSLGADVLPEYKLQAPRIHRWTILHYSPFKAVWDWLILLLVIYTAVFTPYSAAFLLKEPEEDAQTADCGYACQPLAVVDLIVDIMFIVDILINFRTTYVNANEEVVSHPGRIAVHYFKGWFLIDMVAAIPFDLLIFGSGSEELIGLLKTARLLRLVRVARKLDRYSEYGAAVLFLLMCTFALIAHWLACIWYAIGNMEQPDMNSRIGWLHNLGDQIGKPYNSSGLGGPSIKDKYVTALYFTFSSLTSVGFGNVSPNTNSEKIFSICVMLIGSLMYASIFGNVSAIIQRLYSGTARYHTQMLRVREFIRFHQIPNPLRQRLEEYFQHAWSYTNGIDMNAVLKGFPECLQADICLHLNRSLLQHCKPFRGATKGCLRALAMKFKTTHAPPGDTLVHAGDLLTALYFISRGSIEILRGDVVVAILGKNDIFGEPLNLYARPGKSNGDVRALTYCDLHKIHRDDLLEVLDMYPEFSDHFWSSLEITFNLRDTNMIPGSPGSTELEGGFNRQRRRKLSFRRRTDKDPEQPGEVPALGPARVGAGPSSWGRPGTPWGDSPSSGPSSPESSEDEGQGRSSSPLRLVPFSSPRPPGEPRGAETLTEDGDKSDTCNPLSGAFSGVSNIFSFWGDSRGRQYQELPRCPAPAPSLLNIPLSSPGRRPRGDVESRLDALQRQLNRLETRLSADMATVLQLLQRQMTLVPPAYSAVTTPGPGPASTSPLLPISPIPTLTLDSLSQVSQFVAFEELPPGAPELPQDGPTRRLSLPGQLGALTSQPLHRHGSDPGSAVWDWLILLLVIYTAVFTPYSAAFLLKEPEEDAQTADCGYACQPLAVVDLIVDIMFIVDILINFRTTYVNANEEVVSHPGRIAVHYFKGWFLIDMVAAIPFDLLIFGSGSEELIGLLKTARLLRLVRVARKLDRYSEYGAAVLFLLMCTFALIAHWLACIWY.

Residues 1–377 (RKFIIANARV…RIHRWTILHY (377 aa)) lie on the Cytoplasmic side of the membrane. The 30-residue stretch at 15–44 (VIYCNDGFCELCGYSRAEVMQRPCTCDFLH) folds into the PAS domain. Residues 66-118 (RKVEIAFYRKDGSCFLCLVDVVPVKNEDGAVIMFILNFEVVMEKDMVGSPARD) form the PAC domain. Positions 207-258 (LVAPGSPPSSVPGPPHTSPRAHSLNPDASGSSCSLARTRSRESCASVRRASS) are disordered. Positions 211–223 (GSPPSSVPGPPHT) are enriched in pro residues. S212 and S216 each carry phosphoserine. Positions 232–243 (PDASGSSCSLAR) are enriched in polar residues. A phosphoserine mark is found at S257, S258, S294, and S325. Residues 378–398 (SPFKAVWDWLILLLVIYTAVF) traverse the membrane as a helical segment. At 399–424 (TPYSAAFLLKEPEEDAQTADCGYACQ) the chain is on the extracellular side. The chain crosses the membrane as a helical span at residues 425–445 (PLAVVDLIVDIMFIVDILINF). Residues 446–469 (RTTYVNANEEVVSHPGRIAVHYFK) are Cytoplasmic-facing. Residues 470 to 490 (GWFLIDMVAAIPFDLLIFGSG) traverse the membrane as a helical segment. The Extracellular segment spans residues 491–494 (SEEL). A helical; Voltage-sensor transmembrane segment spans residues 495–515 (IGLLKTARLLRLVRVARKLDR). The Cytoplasmic portion of the chain corresponds to 516-521 (YSEYGA). The chain crosses the membrane as a helical span at residues 522–542 (AVLFLLMCTFALIAHWLACIW). The Extracellular portion of the chain corresponds to 543 to 585 (YAIGNMEQPDMNSRIGWLHNLGDQIGKPYNSSGLGGPSIKDKY). The segment at residues 586 to 606 (VTALYFTFSSLTSVGFGNVSP) is an intramembrane region (pore-forming). The short motif at 598 to 603 (SVGFGN) is the Selectivity filter element. Topologically, residues 607-612 (NTNSEK) are extracellular. The chain crosses the membrane as a helical span at residues 613 to 633 (IFSICVMLIGSLMYASIFGNV). Topologically, residues 634 to 1294 (SAIIQRLYSG…IAHWLACIWY (661 aa)) are cytoplasmic. The cNMP-binding domain stretch occupies residues 716 to 816 (PFRGATKGCL…IHRDDLLEVL (101 aa)). A disordered region spans residues 844 to 956 (GSPGSTELEG…LTEDGDKSDT (113 aa)). Phosphoserine is present on residues S845 and S848. Positions 857 to 866 (RQRRRKLSFR) are enriched in basic residues. Over residues 902–913 (GDSPSSGPSSPE) the composition is skewed to low complexity. Position 987 is an omega-N-methylarginine (R987). Positions 1008-1035 (RGDVESRLDALQRQLNRLETRLSADMAT) form a coiled coil. At S1110 the chain carries Phosphoserine.

The protein belongs to the potassium channel family. H (Eag) (TC 1.A.1.20) subfamily. Kv11.1/KCNH2 sub-subfamily. In terms of assembly, the potassium channel is probably composed of a homo- or heterotetrameric complex of pore-forming alpha subunits that can associate with modulating beta subunits. Interacts with DNAJB12 and DNAJB14; chaperones DNAJB12 and DNAJB14 promote tetramerization. Heteromultimer with KCNH6/ERG2 and KCNH7/ERG3. Interacts with ALG10B. Forms a stable complex with KCNE1 or KCNE2, and that this heteromultimerization regulates Inward rectifier potassium channel activity. Interacts with CANX. The core-glycosylated, but not the fully glycosylated form interacts with RNF207. Interacts with NDFIP1 and NDFIP2; this interaction decreases the cell membrane expression by targeting KCNH2, through interaction with NEDD4L, for the degradation through the multivesicular bodies (MVBs)-lysosomal pathway. Post-translationally, phosphorylated on serine and threonine residues. Phosphorylation by PKA inhibits ion conduction. In terms of tissue distribution, highly expressed in heart and brain.

The protein resides in the cell membrane. It catalyses the reaction K(+)(in) = K(+)(out). Functionally, pore-forming (alpha) subunit of voltage-gated inwardly rectifying potassium channel. Characterized by unusual gating kinetics by producing relatively small outward currents during membrane depolarization and large inward currents during subsequent repolarization which reflect a rapid inactivation during depolarization and quick recovery from inactivation but slow deactivation (closing) during repolarization. Channel properties are modulated by cAMP and subunit assembly. Forms a stable complex with KCNE1 or KCNE2, and that this heteromultimerization regulates inward rectifier potassium channel activity. The protein is Voltage-gated inwardly rectifying potassium channel KCNH2 of Cavia porcellus (Guinea pig).